The primary structure comprises 324 residues: Acetyl-coenzyme A carboxylase carboxyl transferase subunit alpha (324 aa).

A CoA carboxyltransferase C-terminal domain is found at 37–291 (ILEDKLENLE…DLMLRKTFEQ (255 aa)).

Belongs to the AccA family. Acetyl-CoA carboxylase is a heterohexamer composed of biotin carboxyl carrier protein (AccB), biotin carboxylase (AccC) and two subunits each of ACCase subunit alpha (AccA) and ACCase subunit beta (AccD).

It localises to the cytoplasm. The catalysed reaction is N(6)-carboxybiotinyl-L-lysyl-[protein] + acetyl-CoA = N(6)-biotinyl-L-lysyl-[protein] + malonyl-CoA. It functions in the pathway lipid metabolism; malonyl-CoA biosynthesis; malonyl-CoA from acetyl-CoA: step 1/1. Component of the acetyl coenzyme A carboxylase (ACC) complex. First, biotin carboxylase catalyzes the carboxylation of biotin on its carrier protein (BCCP) and then the CO(2) group is transferred by the carboxyltransferase to acetyl-CoA to form malonyl-CoA. This Bacillus cereus (strain Q1) protein is Acetyl-coenzyme A carboxylase carboxyl transferase subunit alpha.